A 265-amino-acid polypeptide reads, in one-letter code: NAD kinase 2 (265 aa).

Residue aspartate 51 is the Proton acceptor of the active site. NAD(+) contacts are provided by residues 51-52 (DG), 122-123 (NE), arginine 149, aspartate 151, 162-167 (TAYNKS), and alanine 186.

It belongs to the NAD kinase family. The cofactor is a divalent metal cation.

Its subcellular location is the cytoplasm. It catalyses the reaction NAD(+) + ATP = ADP + NADP(+) + H(+). Its function is as follows. Involved in the regulation of the intracellular balance of NAD and NADP, and is a key enzyme in the biosynthesis of NADP. Catalyzes specifically the phosphorylation on 2'-hydroxyl of the adenosine moiety of NAD to yield NADP. The sequence is that of NAD kinase 2 from Bacillus licheniformis (strain ATCC 14580 / DSM 13 / JCM 2505 / CCUG 7422 / NBRC 12200 / NCIMB 9375 / NCTC 10341 / NRRL NRS-1264 / Gibson 46).